The following is a 350-amino-acid chain: Ribosomal RNA large subunit methyltransferase Cfr (350 aa).

Glu92 acts as the Proton acceptor in catalysis. Residues 99-333 (EAGWESFCIS…VTIRSQFGRE (235 aa)) enclose the Radical SAM core domain. A disulfide bridge connects residues Cys106 and Cys338. [4Fe-4S] cluster-binding residues include Cys113, Cys117, and Cys120. S-adenosyl-L-methionine is bound by residues 159–160 (GE), Ser190, 213–215 (SLH), and Asn293. The active-site S-methylcysteine intermediate is Cys338.

This sequence belongs to the radical SAM superfamily. RlmN family. Cfr subfamily. [4Fe-4S] cluster is required as a cofactor.

It localises to the cytoplasm. The enzyme catalyses adenosine(2503) in 23S rRNA + 2 reduced [2Fe-2S]-[ferredoxin] + 2 S-adenosyl-L-methionine = 8-methyladenosine(2503) in 23S rRNA + 5'-deoxyadenosine + L-methionine + 2 oxidized [2Fe-2S]-[ferredoxin] + S-adenosyl-L-homocysteine. Specifically methylates position 8 of adenine 2503 in 23S rRNA. Confers resistance to some classes of antibiotics. This is Ribosomal RNA large subunit methyltransferase Cfr from Shouchella clausii (strain KSM-K16) (Alkalihalobacillus clausii).